Here is a 294-residue protein sequence, read N- to C-terminus: 4-hydroxy-tetrahydrodipicolinate synthase (294 aa).

Residue Thr-47 coordinates pyruvate. Tyr-135 serves as the catalytic Proton donor/acceptor. Lys-163 (schiff-base intermediate with substrate) is an active-site residue. Val-205 provides a ligand contact to pyruvate.

The protein belongs to the DapA family. As to quaternary structure, homotetramer; dimer of dimers.

The protein resides in the cytoplasm. It carries out the reaction L-aspartate 4-semialdehyde + pyruvate = (2S,4S)-4-hydroxy-2,3,4,5-tetrahydrodipicolinate + H2O + H(+). Its pathway is amino-acid biosynthesis; L-lysine biosynthesis via DAP pathway; (S)-tetrahydrodipicolinate from L-aspartate: step 3/4. Functionally, catalyzes the condensation of (S)-aspartate-beta-semialdehyde [(S)-ASA] and pyruvate to 4-hydroxy-tetrahydrodipicolinate (HTPA). The sequence is that of 4-hydroxy-tetrahydrodipicolinate synthase from Rickettsia canadensis (strain McKiel).